Here is a 568-residue protein sequence, read N- to C-terminus: MPSTDLLKLKDFEPYLEILEAYSTKAKNYVNGYCTKYEPWQLIAGSVLCTLLVVWVYELIFQPESLWSRFKNKLFRLIRKMPFIGRKIQQQLTKAKKDLVKNMPFLKLDKDYVKTLPAQGLSTAEVLERLKEYSSMDVFWQEGKASGAVYSGEPKLTELLVQAYGEFTWSNPLHPDIFPGLRKLEAEIVRMTCSLFNGGPDSCGCVTSGGTESILMACKAYRDLALEKGIKTPEIVAPESAHAAFDKAAHYFGMKIVRVAQKKNMEVDVRAMKRAISRNTAMLVCSAPQFPHGVIDPIPEVAKLAVKYKIPFHVDACLGGFLIVFMEKAGYPLEKPFDFRVKGVTSISADTHKYGYAPKGSSVVMYSNEKYRKYQFFVDADWQGGIYASPSIAGSRPGGIIAACWAALMHFGENGYVEATKQIIKTARFLKSELENIKNIFILGDPQLSVIALGSNDFDIYRLSNMMSAKGWNFNYLQFPRSIHFCITLVHTRKRVAIQFLKDIRESVTQIMKNPKAKTTGMGAIYGMAQATIDRKMVAEISSVFLDSLYSTDPVTQGNQMNGSPKPR.

Residues 1–41 (MPSTDLLKLKDFEPYLEILEAYSTKAKNYVNGYCTKYEPWQ) are Lumenal-facing. The helical; Signal-anchor for type III membrane protein transmembrane segment at 42–62 (LIAGSVLCTLLVVWVYELIFQ) threads the bilayer. Residues 63–568 (PESLWSRFKN…NQMNGSPKPR (506 aa)) lie on the Cytoplasmic side of the membrane. Lysine 353 bears the N6-(pyridoxal phosphate)lysine; alternate mark. Residue lysine 353 is modified to N6-acetyllysine; alternate. Residues tyrosine 356 and tyrosine 366 each carry the 3'-nitrotyrosine modification. Serine 564 is modified (phosphoserine).

It belongs to the group II decarboxylase family. Sphingosine-1-phosphate lyase subfamily. Homodimer. The cofactor is pyridoxal 5'-phosphate.

It localises to the endoplasmic reticulum membrane. It catalyses the reaction sphinganine 1-phosphate = hexadecanal + phosphoethanolamine. The enzyme catalyses sphing-4-enine 1-phosphate = (2E)-hexadecenal + phosphoethanolamine. The protein operates within lipid metabolism; sphingolipid metabolism. In terms of biological role, cleaves phosphorylated sphingoid bases (PSBs), such as sphingosine-1-phosphate, into fatty aldehydes and phosphoethanolamine. Elevates stress-induced ceramide production and apoptosis. Required for global lipid homeostasis in liver and cholesterol homeostasis in fibroblasts. Involved in the regulation of pro-inflammatory response and neutrophil trafficking. Modulates neuronal autophagy via phosphoethanolamine production which regulates accumulation of aggregate-prone proteins such as APP. Seems to play a role in establishing neuronal contact sites and axonal maintenance. The protein is Sphingosine-1-phosphate lyase 1 of Rattus norvegicus (Rat).